The chain runs to 920 residues: Sensor histidine kinase SsrA (920 aa).

Residues 1–19 (MNLLNLKNTLQTSLVIRLT) lie on the Cytoplasmic side of the membrane. Residues 20-40 (FLFLLTTIIIWLLSVLTAAYI) form a helical membrane-spanning segment. The Periplasmic portion of the chain corresponds to 41-291 (SMVQKRQHII…YGNLHNRILK (251 aa)). A helical membrane pass occupies residues 292–312 (IILQQIPFTLTALVLMTSAFC). Residues 313 to 920 (WLLHRSLAKP…RMIFKNYTIT (608 aa)) are Cytoplasmic-facing. The region spanning 317 to 369 (RSLAKPLWRFVDVINKTATAPLSTRLPAQRLDELDSIAGAFNQLLDTLQVQYD) is the HAMP domain. Residues 354–395 (AGAFNQLLDTLQVQYDNLENKVAERTQALNEAKKRAERANKR) are a coiled coil. The region spanning 402 to 614 (VISHELRTPM…CVSLVLPLQE (213 aa)) is the Histidine kinase domain. The ATP site is built by H405 and D549. At H405 the chain carries Phosphohistidine; by autocatalysis. One can recognise a Response regulatory domain in the interval 690–808 (QILLVDDADI…TLARYISIAA (119 aa)). D739 bears the 4-aspartylphosphate mark.

Post-translationally, autophosphorylated.

The protein resides in the cell inner membrane. The enzyme catalyses ATP + protein L-histidine = ADP + protein N-phospho-L-histidine.. In terms of biological role, member of the two-component regulatory system SsrA/SsrB (SpiR/SsrB) that is required for intracellular proliferation and systemic dissemination within the host. When inside acidic Salmonella-containing vesicles (SCV) within host cells the SsrA sensor kinase autophosphorylates and the phosphoryl group is transferred to the response regulator SsrB; phosphorylated SsrB activates the expression of genes encoding virulence proteins, including pathogenicity island 2 (SPI2) and other horizontally acquired genes, and antagonizes the action of transcriptional repressor hns (H-NS). This chain is Sensor histidine kinase SsrA, found in Salmonella typhimurium (strain LT2 / SGSC1412 / ATCC 700720).